The sequence spans 159 residues: FCS-Like Zinc finger 2 (159 aa).

An FLZ-type zinc finger spans residues 75–119; that stretch reads HFLDSCFLCKKRLGDNRDIFMYRGDTPFCSEECREEQIERDEAKE. Basic and acidic residues predominate over residues 113-122; that stretch reads ERDEAKEKKQ. Residues 113 to 159 form a disordered region; sequence ERDEAKEKKQSLSTSVKAMRRNEKRSSSSSPTRSRNYAFRTGTVAAA.

The protein belongs to the FLZ family. As to quaternary structure, interacts with KIN10 and KIN11 via its FLZ-type zinc finger domain. Interacts with KINB1, KINB2, KINB3 and SNF4 via its N-terminal part. Forms heterodimer with FLZ7, FLZ10, FLZ11, FLZ12, FLZ15, FLZ17 and FLZ18 in vitro.

May act as an adapter to facilitate the interaction of SnRK1 complex with effector proteins, conferring tissue- and stimulus-type specific differences in the SnRK1 regulation pathway. This Arabidopsis thaliana (Mouse-ear cress) protein is FCS-Like Zinc finger 2.